A 130-amino-acid polypeptide reads, in one-letter code: 3-aminoacrylate deaminase RutC (130 aa).

Belongs to the RutC family.

The catalysed reaction is (Z)-3-aminoacrylate + H2O + H(+) = 3-oxopropanoate + NH4(+). Its function is as follows. Involved in pyrimidine catabolism. Catalyzes the deamination of 3-aminoacrylate to malonic semialdehyde, a reaction that can also occur spontaneously. RutC may facilitate the reaction and modulate the metabolic fitness, rather than catalyzing essential functions. This chain is 3-aminoacrylate deaminase RutC, found in Klebsiella variicola (strain At-22).